Here is a 516-residue protein sequence, read N- to C-terminus: Methionine--tRNA ligase (516 aa).

The 'HIGH' region signature appears at 14 to 24 (SYPNGKPHIGH). Positions 302–306 (KMSKS) match the 'KMSKS' region motif. Lys305 is a binding site for ATP.

The protein belongs to the class-I aminoacyl-tRNA synthetase family. MetG type 2B subfamily. In terms of assembly, monomer.

It is found in the cytoplasm. The enzyme catalyses tRNA(Met) + L-methionine + ATP = L-methionyl-tRNA(Met) + AMP + diphosphate. In terms of biological role, is required not only for elongation of protein synthesis but also for the initiation of all mRNA translation through initiator tRNA(fMet) aminoacylation. The sequence is that of Methionine--tRNA ligase from Rhizobium meliloti (strain 1021) (Ensifer meliloti).